A 727-amino-acid polypeptide reads, in one-letter code: 1,4-alpha-glucan branching enzyme GlgB (727 aa).

Catalysis depends on Asp-405, which acts as the Nucleophile. Glu-458 acts as the Proton donor in catalysis.

Belongs to the glycosyl hydrolase 13 family. GlgB subfamily. In terms of assembly, monomer.

It catalyses the reaction Transfers a segment of a (1-&gt;4)-alpha-D-glucan chain to a primary hydroxy group in a similar glucan chain.. Its pathway is glycan biosynthesis; glycogen biosynthesis. Functionally, catalyzes the formation of the alpha-1,6-glucosidic linkages in glycogen by scission of a 1,4-alpha-linked oligosaccharide from growing alpha-1,4-glucan chains and the subsequent attachment of the oligosaccharide to the alpha-1,6 position. The chain is 1,4-alpha-glucan branching enzyme GlgB from Yersinia pestis bv. Antiqua (strain Antiqua).